A 206-amino-acid chain; its full sequence is Putative NAD(P)H nitroreductase MhqN (206 aa).

FMN contacts are provided by residues 11–13 (RRS), 68–70 (QYK), 157–158 (IG), R193, and R196.

It belongs to the nitroreductase family. As to quaternary structure, homodimer. FMN serves as cofactor.

It localises to the cytoplasm. Functionally, putative nitroreductase that may contribute to the degradation of aromatic compounds. The polypeptide is Putative NAD(P)H nitroreductase MhqN (mhqN) (Bacillus subtilis (strain 168)).